We begin with the raw amino-acid sequence, 425 residues long: Enolase (425 aa).

Glutamine 162 serves as a coordination point for (2R)-2-phosphoglycerate. The active-site Proton donor is glutamate 204. Mg(2+) contacts are provided by aspartate 241, glutamate 284, and aspartate 311. 4 residues coordinate (2R)-2-phosphoglycerate: lysine 336, arginine 365, serine 366, and lysine 387. Lysine 336 acts as the Proton acceptor in catalysis.

It belongs to the enolase family. Requires Mg(2+) as cofactor.

The protein localises to the cytoplasm. The protein resides in the secreted. It is found in the cell surface. It carries out the reaction (2R)-2-phosphoglycerate = phosphoenolpyruvate + H2O. Its pathway is carbohydrate degradation; glycolysis; pyruvate from D-glyceraldehyde 3-phosphate: step 4/5. Functionally, catalyzes the reversible conversion of 2-phosphoglycerate (2-PG) into phosphoenolpyruvate (PEP). It is essential for the degradation of carbohydrates via glycolysis. The sequence is that of Enolase from Brucella melitensis biotype 2 (strain ATCC 23457).